Consider the following 429-residue polypeptide: Probable M18 family aminopeptidase 2 (429 aa).

Zn(2+) is bound by residues His-82, His-156, and His-401.

This sequence belongs to the peptidase M18 family. Zn(2+) serves as cofactor.

The polypeptide is Probable M18 family aminopeptidase 2 (Azotobacter vinelandii (strain DJ / ATCC BAA-1303)).